The chain runs to 114 residues: Beta-microseminoprotein E1 (114 aa).

The first 20 residues, 1-20 (MNVLLGGLVIFATFVTLCNG), serve as a signal peptide directing secretion. 5 disulfide bridges follow: cysteine 22-cysteine 70, cysteine 38-cysteine 62, cysteine 57-cysteine 93, cysteine 60-cysteine 69, and cysteine 84-cysteine 107.

The protein belongs to the beta-microseminoprotein family.

It localises to the secreted. This is Beta-microseminoprotein E1 (MSPE) from Saguinus oedipus (Cotton-top tamarin).